A 759-amino-acid chain; its full sequence is Protein zyg-11 homolog A (759 aa).

3 LRR repeats span residues 204-227 (LPRL…LTCK), 235-260 (MHYL…CLLH), and 490-513 (VTSI…FMAV).

Belongs to the zyg-11 family.

Probably acts as a target recruitment subunit in an E3 ubiquitin ligase complex ZYGA-CUL2-elongin BC. The sequence is that of Protein zyg-11 homolog A (ZYG11A) from Homo sapiens (Human).